The chain runs to 157 residues: Endoribonuclease YbeY (157 aa).

3 residues coordinate Zn(2+): H123, H127, and H133.

Belongs to the endoribonuclease YbeY family. Zn(2+) serves as cofactor.

It localises to the cytoplasm. Single strand-specific metallo-endoribonuclease involved in late-stage 70S ribosome quality control and in maturation of the 3' terminus of the 16S rRNA. This chain is Endoribonuclease YbeY, found in Desulfitobacterium hafniense (strain Y51).